The sequence spans 355 residues: S-adenosylmethionine:tRNA ribosyltransferase-isomerase (355 aa).

It belongs to the QueA family. In terms of assembly, monomer.

The protein localises to the cytoplasm. The catalysed reaction is 7-aminomethyl-7-carbaguanosine(34) in tRNA + S-adenosyl-L-methionine = epoxyqueuosine(34) in tRNA + adenine + L-methionine + 2 H(+). It participates in tRNA modification; tRNA-queuosine biosynthesis. In terms of biological role, transfers and isomerizes the ribose moiety from AdoMet to the 7-aminomethyl group of 7-deazaguanine (preQ1-tRNA) to give epoxyqueuosine (oQ-tRNA). This is S-adenosylmethionine:tRNA ribosyltransferase-isomerase from Burkholderia ambifaria (strain ATCC BAA-244 / DSM 16087 / CCUG 44356 / LMG 19182 / AMMD) (Burkholderia cepacia (strain AMMD)).